The chain runs to 358 residues: Peptide chain release factor 1 (358 aa).

N5-methylglutamine is present on Gln233.

The protein belongs to the prokaryotic/mitochondrial release factor family. In terms of processing, methylated by PrmC. Methylation increases the termination efficiency of RF1.

The protein localises to the cytoplasm. Its function is as follows. Peptide chain release factor 1 directs the termination of translation in response to the peptide chain termination codons UAG and UAA. The protein is Peptide chain release factor 1 of Staphylococcus carnosus (strain TM300).